The primary structure comprises 370 residues: uncharacterized protein (370 aa).

Belongs to the metallo-dependent hydrolases superfamily.

This is an uncharacterized protein from Mycobacterium bovis (strain ATCC BAA-935 / AF2122/97).